The chain runs to 167 residues: Small ribosomal subunit protein uS5 (167 aa).

The region spanning 12–75 (LQEKLVAVNR…EKARRNIVSV (64 aa)) is the S5 DRBM domain.

The protein belongs to the universal ribosomal protein uS5 family. Part of the 30S ribosomal subunit. Contacts proteins S4 and S8.

Its function is as follows. With S4 and S12 plays an important role in translational accuracy. In terms of biological role, located at the back of the 30S subunit body where it stabilizes the conformation of the head with respect to the body. The chain is Small ribosomal subunit protein uS5 from Shewanella loihica (strain ATCC BAA-1088 / PV-4).